A 594-amino-acid chain; its full sequence is Aspartate--tRNA(Asp/Asn) ligase (594 aa).

An L-aspartate-binding site is contributed by Glu-175. An aspartate region spans residues 199 to 202 (QLFK). Residue Arg-221 participates in L-aspartate binding. ATP-binding positions include 221 to 223 (RDE) and Gln-230. Residue His-446 coordinates L-aspartate. Glu-492 is a binding site for ATP. Arg-499 contributes to the L-aspartate binding site. ATP is bound at residue 544 to 547 (GFDR).

It belongs to the class-II aminoacyl-tRNA synthetase family. Type 1 subfamily. As to quaternary structure, homodimer.

Its subcellular location is the cytoplasm. It carries out the reaction tRNA(Asx) + L-aspartate + ATP = L-aspartyl-tRNA(Asx) + AMP + diphosphate. Functionally, aspartyl-tRNA synthetase with relaxed tRNA specificity since it is able to aspartylate not only its cognate tRNA(Asp) but also tRNA(Asn). Reaction proceeds in two steps: L-aspartate is first activated by ATP to form Asp-AMP and then transferred to the acceptor end of tRNA(Asp/Asn). This chain is Aspartate--tRNA(Asp/Asn) ligase, found in Hydrogenobaculum sp. (strain Y04AAS1).